The sequence spans 379 residues: Protein RecA (379 aa).

79 to 86 (GPESSGKT) is a binding site for ATP.

This sequence belongs to the RecA family.

The protein resides in the cytoplasm. Can catalyze the hydrolysis of ATP in the presence of single-stranded DNA, the ATP-dependent uptake of single-stranded DNA by duplex DNA, and the ATP-dependent hybridization of homologous single-stranded DNAs. It interacts with LexA causing its activation and leading to its autocatalytic cleavage. This Streptococcus agalactiae protein is Protein RecA.